We begin with the raw amino-acid sequence, 394 residues long: Aromatic aminotransferase ISS1 (394 aa).

G2 bears the N-acetylglycine mark. Residue G38 participates in substrate binding. Residues Y64, 98–99 (AN), Y123, N176, Y207, and 230–232 (SFS) each bind pyridoxal 5'-phosphate. Residues Y123 and N176 each coordinate substrate. At K233 the chain carries N6-(pyridoxal phosphate)lysine. Position 241 (R241) interacts with pyridoxal 5'-phosphate. The substrate site is built by R362 and R374.

It belongs to the class-I pyridoxal-phosphate-dependent aminotransferase family. As to quaternary structure, homodimer. The cofactor is pyridoxal 5'-phosphate. Expressed in roots, cotyledons and flowers.

The protein resides in the cytoplasm. It catalyses the reaction a 2-oxocarboxylate + L-methionine = 4-methylsulfanyl-2-oxobutanoate + an L-alpha-amino acid. The catalysed reaction is L-tryptophan + 2-oxoglutarate = indole-3-pyruvate + L-glutamate. It carries out the reaction L-tyrosine + 2-oxoglutarate = 3-(4-hydroxyphenyl)pyruvate + L-glutamate. In terms of biological role, coordinates and prevents auxin (IAA) and ethylene biosynthesis, thus regulating auxin homeostasis in young seedlings. Shows aminotransferase activity with methionine; can use the ethylene biosynthetic intermediate L-methionine (L-Met) as an amino donor and the auxin biosynthetic intermediate, indole-3-pyruvic acid (3-IPA) as an amino acceptor to produce L-tryptophan (L-Trp) and 2-oxo-4-methylthiobutyric acid (KMBA). Can also use tryptophan (Trp), phenylalanine (Phe), and tyrosine (Tyr) as substrates. Regulates tryptophan (Trp) homeostasis and catabolism in mature plants. Also possibly involved in the metabolism of other aromatic amino acids and phenylpropanoid homeostasis. The protein is Aromatic aminotransferase ISS1 of Arabidopsis thaliana (Mouse-ear cress).